Reading from the N-terminus, the 519-residue chain is uncharacterized protein (519 aa).

The protein belongs to the glycogen phosphorylase family.

This is an uncharacterized protein from Methanocaldococcus jannaschii (strain ATCC 43067 / DSM 2661 / JAL-1 / JCM 10045 / NBRC 100440) (Methanococcus jannaschii).